A 381-amino-acid chain; its full sequence is MLTEEELIQIRRHLHQIPELALQEFDTHQYLVETIAGFNQAFLEVRTFKELPTALMVLVHGKNPQRTIGYRTDIDALPVEEQTGLPYSSTHPGVMHACGHDIHMTVALGVLNYFSEHQPQDNILFFFQPAEESENGGKRAYELGLFSGKWKPDEFYGLHDNPDLPAGAIGCRMGTLFAGTTEVNIDLNGKGGHAAYPQNANDTVVAAASLILQVQTVISRSIDPIQSGVITLGKIDGGTIRNVIAGHTRIEGTIRGLTQTMIETIDNRLKDVCEGIGCSFNMDVSLELNQGGYWPVENNPELTKRFIHYMEETPTVNFIETEPAMTGEDFGYLLAKFPGTMFWLGVEDDSQLHSATLTPNEKAIKRGVDAITGFLEYRMQN.

Residue Asp-73 is part of the active site. Glu-132 acts as the Proton acceptor in catalysis.

The protein belongs to the peptidase M20A family. N-acetyldiaminopimelate deacetylase subfamily.

It catalyses the reaction N-acetyl-(2S,6S)-2,6-diaminopimelate + H2O = (2S,6S)-2,6-diaminopimelate + acetate. It participates in amino-acid biosynthesis; L-lysine biosynthesis via DAP pathway; LL-2,6-diaminopimelate from (S)-tetrahydrodipicolinate (acetylase route): step 3/3. Catalyzes the conversion of N-acetyl-diaminopimelate to diaminopimelate and acetate. The chain is N-acetyldiaminopimelate deacetylase from Limosilactobacillus reuteri (strain DSM 20016) (Lactobacillus reuteri).